A 176-amino-acid polypeptide reads, in one-letter code: MAELATIARPYAEALFKASGSDLGAAAAWLDELAAIAANVQLQQFAGNPGVTVTQTFDVISGVAKSQLPDAAKNFLRTVIENGRISVLPEIAAQFRVLKNAQSGSSDATVYSAFPLEGPALADLAATLEKRFGRKLNFAVELEPALIGGVRVVVGDEVLDTSVKARLEQMKVALIS.

This sequence belongs to the ATPase delta chain family. In terms of assembly, F-type ATPases have 2 components, F(1) - the catalytic core - and F(0) - the membrane proton channel. F(1) has five subunits: alpha(3), beta(3), gamma(1), delta(1), epsilon(1). F(0) has three main subunits: a(1), b(2) and c(10-14). The alpha and beta chains form an alternating ring which encloses part of the gamma chain. F(1) is attached to F(0) by a central stalk formed by the gamma and epsilon chains, while a peripheral stalk is formed by the delta and b chains.

Its subcellular location is the cell inner membrane. Functionally, f(1)F(0) ATP synthase produces ATP from ADP in the presence of a proton or sodium gradient. F-type ATPases consist of two structural domains, F(1) containing the extramembraneous catalytic core and F(0) containing the membrane proton channel, linked together by a central stalk and a peripheral stalk. During catalysis, ATP synthesis in the catalytic domain of F(1) is coupled via a rotary mechanism of the central stalk subunits to proton translocation. In terms of biological role, this protein is part of the stalk that links CF(0) to CF(1). It either transmits conformational changes from CF(0) to CF(1) or is implicated in proton conduction. This chain is ATP synthase subunit delta, found in Polaromonas sp. (strain JS666 / ATCC BAA-500).